A 203-amino-acid chain; its full sequence is A-type ATP synthase subunit E (203 aa).

The protein belongs to the V-ATPase E subunit family. In terms of assembly, might form a homodimer. Interacts with subunit H via residues 41-60. The A-type ATPase is composed of subunits A(3), B(3), C, D, E(1 or 2), F, H(2), I and K(x).

It localises to the cell membrane. Its function is as follows. Component of the A-type ATP synthase that produces ATP from ADP in the presence of a proton gradient across the membrane. The sequence is that of A-type ATP synthase subunit E from Methanocaldococcus jannaschii (strain ATCC 43067 / DSM 2661 / JAL-1 / JCM 10045 / NBRC 100440) (Methanococcus jannaschii).